The chain runs to 147 residues: Small ribosomal subunit protein bS16 (147 aa).

A disordered region spans residues 89 to 147; that stretch reads AWTHGNNPKKAEPGKKAQERAKERADKAEAKAAAAAEAAAAPAEEAPAEAAPAEETSES. Residues 97 to 118 are compositionally biased toward basic and acidic residues; sequence KKAEPGKKAQERAKERADKAEA. A compositionally biased stretch (low complexity) spans 119–147; the sequence is KAAAAAEAAAAPAEEAPAEAAPAEETSES.

It belongs to the bacterial ribosomal protein bS16 family.

This Hyphomonas neptunium (strain ATCC 15444) protein is Small ribosomal subunit protein bS16.